A 2197-amino-acid chain; its full sequence is Protein Ycf2 (2197 aa).

1539-1546 (GSIGTGRS) is an ATP binding site.

The protein belongs to the Ycf2 family.

The protein resides in the plastid. Its subcellular location is the chloroplast stroma. Probable ATPase of unknown function. Its presence in a non-photosynthetic plant (Epifagus virginiana) and experiments in tobacco indicate that it has an essential function which is probably not related to photosynthesis. This is Protein Ycf2 from Ipomoea purpurea (Common morning glory).